The following is a 236-amino-acid chain: MTSKLINFITIEKERFEDECVKFIKNVITDSINSRNIATIGLSGGSTPKPIYEMLGNDSSIDWTKVYFFAVDERYIDKSSKDSIYDLISKSVFKNRENLLVDHFITPNTSLPLKECIETYSNDLKKLIEKSNGSPDLVTLGMGEDGHIASIFPNSPKSPLDETDLVYHTTTERFAIFDRITTNINFLASSKNKVFFMSGSSKKKVWDEMESSQINVSRWPAHKIISSGNTNVFYRE.

The protein belongs to the glucosamine/galactosamine-6-phosphate isomerase family. 6-phosphogluconolactonase subfamily.

The enzyme catalyses 6-phospho-D-glucono-1,5-lactone + H2O = 6-phospho-D-gluconate + H(+). The protein operates within carbohydrate degradation; pentose phosphate pathway; D-ribulose 5-phosphate from D-glucose 6-phosphate (oxidative stage): step 2/3. Its function is as follows. Hydrolysis of 6-phosphogluconolactone to 6-phosphogluconate. The sequence is that of Probable 6-phosphogluconolactonase (pgl) from Dictyostelium discoideum (Social amoeba).